The chain runs to 361 residues: dTDP-glucose 4,6-dehydratase (361 aa).

NAD(+) is bound by residues 11 to 12, 32 to 35, 58 to 59, 80 to 84, and threonine 99; these read FI, DKLT, DI, and LAAES. A substrate-binding site is contributed by serine 84. Threonine 133 is a substrate binding site. Aspartate 134 serves as the catalytic Proton donor. Active-site proton acceptor residues include glutamate 135 and tyrosine 167. An NAD(+)-binding site is contributed by 167–171; that stretch reads YSASK. Asparagine 196 provides a ligand contact to substrate. Residue asparagine 197 coordinates NAD(+). Residues 206–207, 222–224, arginine 231, asparagine 266, 296–300, and tyrosine 357 each bind substrate; these read KL, PIY, and DRPGH.

The protein belongs to the NAD(P)-dependent epimerase/dehydratase family. dTDP-glucose dehydratase subfamily. Homodimer. Requires NAD(+) as cofactor.

The catalysed reaction is dTDP-alpha-D-glucose = dTDP-4-dehydro-6-deoxy-alpha-D-glucose + H2O. It participates in carbohydrate biosynthesis; dTDP-L-rhamnose biosynthesis. The protein operates within bacterial outer membrane biogenesis; LPS O-antigen biosynthesis. Its function is as follows. Catalyzes the dehydration of dTDP-D-glucose to form dTDP-6-deoxy-D-xylo-4-hexulose via a three-step process involving oxidation, dehydration and reduction. This Salmonella typhimurium (strain LT2 / SGSC1412 / ATCC 700720) protein is dTDP-glucose 4,6-dehydratase.